The sequence spans 475 residues: Ankyrin repeat, SAM and basic leucine zipper domain-containing protein 1 (475 aa).

Residues 1-25 form a disordered region; that stretch reads MAAGALRGLPVAGGGESSESEDDGW. Phosphoserine is present on residues serine 17, serine 18, and serine 20. ANK repeat units lie at residues 45 to 74, 78 to 107, 110 to 144, 148 to 177, 181 to 210, and 214 to 243; these read EKKE…SVDS, YGWT…NASF, DKQS…DPNV, RLMT…EVNT, NGYT…NKML, and DGKM…PLEG. Residues 272 to 334 form the SAM domain; sequence SYTAFGDLEV…KILAALKELQ (63 aa).

In terms of assembly, interacts with DDX4, PIWIL1, RANBP9 and TDRD1.

It localises to the cytoplasm. In terms of biological role, plays a central role during spermatogenesis by repressing transposable elements and preventing their mobilization, which is essential for the germline integrity. Acts via the piRNA metabolic process, which mediates the repression of transposable elements during meiosis by forming complexes composed of piRNAs and Piwi proteins and governs the methylation and subsequent repression of transposons. Its association with pi-bodies suggests a participation in the primary piRNAs metabolic process. Required prior to the pachytene stage to facilitate the production of multiple types of piRNAs, including those associated with repeats involved in the regulation of retrotransposons. May act by mediating protein-protein interactions during germ cell maturation. The sequence is that of Ankyrin repeat, SAM and basic leucine zipper domain-containing protein 1 (ASZ1) from Nomascus leucogenys (Northern white-cheeked gibbon).